Consider the following 506-residue polypeptide: 2,3-bisphosphoglycerate-independent phosphoglycerate mutase (506 aa).

Residues D9 and S59 each contribute to the Mn(2+) site. The active-site Phosphoserine intermediate is the S59. Substrate is bound by residues H120, 149–150, R181, R187, 254–257, and K327; these read RD and RADR. D394, H398, D435, H436, and H452 together coordinate Mn(2+).

It belongs to the BPG-independent phosphoglycerate mutase family. Mn(2+) serves as cofactor.

It catalyses the reaction (2R)-2-phosphoglycerate = (2R)-3-phosphoglycerate. It participates in carbohydrate degradation; glycolysis; pyruvate from D-glyceraldehyde 3-phosphate: step 3/5. Its function is as follows. Catalyzes the interconversion of 2-phosphoglycerate and 3-phosphoglycerate. In Natronomonas pharaonis (strain ATCC 35678 / DSM 2160 / CIP 103997 / JCM 8858 / NBRC 14720 / NCIMB 2260 / Gabara) (Halobacterium pharaonis), this protein is 2,3-bisphosphoglycerate-independent phosphoglycerate mutase.